Here is a 281-residue protein sequence, read N- to C-terminus: ATP synthase gamma chain (281 aa).

It belongs to the ATPase gamma chain family. As to quaternary structure, F-type ATPases have 2 components, CF(1) - the catalytic core - and CF(0) - the membrane proton channel. CF(1) has five subunits: alpha(3), beta(3), gamma(1), delta(1), epsilon(1). CF(0) has three main subunits: a, b and c.

The protein localises to the cell membrane. Its function is as follows. Produces ATP from ADP in the presence of a proton gradient across the membrane. The gamma chain is believed to be important in regulating ATPase activity and the flow of protons through the CF(0) complex. In Desulfitobacterium hafniense (strain DSM 10664 / DCB-2), this protein is ATP synthase gamma chain.